Here is a 318-residue protein sequence, read N- to C-terminus: Curved DNA-binding protein (318 aa).

The J domain occupies 5–69 (DYYKILGVEP…QKRAEFDEIR (65 aa)). The tract at residues 111 to 130 (GGGNPFGGARQQQRSAGRRG) is disordered.

The protein localises to the cytoplasm. The protein resides in the nucleoid. Functionally, DNA-binding protein that preferentially recognizes a curved DNA sequence. It is probably a functional analog of DnaJ; displays overlapping activities with DnaJ, but functions under different conditions, probably acting as a molecular chaperone in an adaptive response to environmental stresses other than heat shock. Lacks autonomous chaperone activity; binds native substrates and targets them for recognition by DnaK. Its activity is inhibited by the binding of CbpM. The sequence is that of Curved DNA-binding protein from Pseudomonas putida (strain GB-1).